We begin with the raw amino-acid sequence, 191 residues long: Outer membrane lipoprotein DolP (191 aa).

Positions 1–18 (MKALSPIAVLISALLLQG) are cleaved as a signal peptide. Cys-19 carries the N-palmitoyl cysteine lipid modification. The S-diacylglycerol cysteine moiety is linked to residue Cys-19. BON domains lie at 46-115 (DDGT…RQGQ) and 124-191 (NDTW…TFIK).

The protein belongs to the lipoprotein DolP family.

It is found in the cell outer membrane. In terms of biological role, plays an important role in maintaining outer membrane integrity. The chain is Outer membrane lipoprotein DolP from Escherichia coli O157:H7.